We begin with the raw amino-acid sequence, 337 residues long: D-lactate dehydrogenase (337 aa).

Residues 156–157, aspartate 176, 207–208, asparagine 213, 234–236, and aspartate 260 each bind NAD(+); these read HI, VP, and CSR. Residue arginine 236 is part of the active site. Glutamate 265 is a catalytic residue. Histidine 297 acts as the Proton donor in catalysis.

Belongs to the D-isomer specific 2-hydroxyacid dehydrogenase family. In terms of assembly, homodimer.

The enzyme catalyses (R)-lactate + NAD(+) = pyruvate + NADH + H(+). The polypeptide is D-lactate dehydrogenase (Lactobacillus helveticus (Lactobacillus suntoryeus)).